Here is a 172-residue protein sequence, read N- to C-terminus: Trypsin inhibitor DE-3 (172 aa).

Intrachain disulfides connect Cys-39–Cys-83 and Cys-132–Cys-139.

This sequence belongs to the protease inhibitor I3 (leguminous Kunitz-type inhibitor) family.

Its function is as follows. Inhibition of trypsin. In Erythrina latissima (Broad-leaved coral tree), this protein is Trypsin inhibitor DE-3.